The sequence spans 714 residues: MPAAAGDGLLGEPAAPGGDGGAEDTTRPAAACEGSFLPAWVSGVSRERLRDFQHHKRVGNYLIGSRKLGEGSFAKVREGLHVLTGEKVAIKVIDKKRAKKDTYVTKNLRREGQIQQMIRHPNITQLLDILETENSYYLVMELCPGGNLMHKIYEKKRLDEAEARRYIRQLISAVEHLHRAGVVHRDLKIENLLLDEDNNIKLIDFGLSNCAGILGYSDPFSTQCGSPAYAAPELLARKKYGPKIDVWSIGVNMYAMLTGTLPFTVEPFSLRALYQKMVDKAMNPLPTQLSTGAVNFLRSLLEPDPVKRPNIQQALANRWLNENYTGKVPCNVTYPNRISLEDLSPSVVLHMTEKLGYKNSDVINTVLSNRACHILAIYFLLNKKLERYLSGKSDIQDSICYKTQLYQIEKCRATKEPYEASLDTWTRDFEFHAVQDKKPKEQEKRGDFLHRPFSKKLDKNLPSHKQPSPSLITQLQSTKALLKDRKASKSGFPDKDSFVCRNLFRKTSDSNCVASSSMEFIPVPPPRTPRIVKKLEPHQPGPGSASILPKEEPLLLDMVRSFESVDREDHIELLSPSHHYRILSSPVSLARRNSSERTLSQGLLSGSTSPLQTPLHSTLVSFAHEEKNSPPKEEGVCSPPPVPSNGLLQPLGSPNCVKSRGRFPMMGIGQMLRKRHQSLQPSSERSLDASMSPLQPTAPSSLSFDMADGVKGQC.

Over residues 1-16 (MPAAAGDGLLGEPAAP) the composition is skewed to low complexity. Residues 1–28 (MPAAAGDGLLGEPAAPGGDGGAEDTTRP) form a disordered region. The Protein kinase domain occupies 62–320 (LIGSRKLGEG…IQQALANRWL (259 aa)). Residues 68–76 (LGEGSFAKV) and K91 contribute to the ATP site. The active-site Proton acceptor is D186. A compositionally biased stretch (basic and acidic residues) spans 624 to 635 (HEEKNSPPKEEG). 2 disordered regions span residues 624–658 (HEEKNSPPKEEGVCSPPPVPSNGLLQPLGSPNCVK) and 674–714 (KRHQ…KGQC). The span at 692–703 (SPLQPTAPSSLS) shows a compositional bias: polar residues.

Belongs to the protein kinase superfamily. CAMK Ser/Thr protein kinase family. SNF1 subfamily.

The catalysed reaction is L-seryl-[protein] + ATP = O-phospho-L-seryl-[protein] + ADP + H(+). The enzyme catalyses L-threonyl-[protein] + ATP = O-phospho-L-threonyl-[protein] + ADP + H(+). This chain is Hormonally up-regulated neu tumor-associated kinase (Hunk), found in Mus musculus (Mouse).